Reading from the N-terminus, the 156-residue chain is ATP synthase subunit b (156 aa).

The helical transmembrane segment at 7-27 threads the bilayer; that stretch reads LFVQAIVFLILVWFTMQFVWP.

It belongs to the ATPase B chain family. As to quaternary structure, F-type ATPases have 2 components, F(1) - the catalytic core - and F(0) - the membrane proton channel. F(1) has five subunits: alpha(3), beta(3), gamma(1), delta(1), epsilon(1). F(0) has three main subunits: a(1), b(2) and c(10-14). The alpha and beta chains form an alternating ring which encloses part of the gamma chain. F(1) is attached to F(0) by a central stalk formed by the gamma and epsilon chains, while a peripheral stalk is formed by the delta and b chains.

Its subcellular location is the cell inner membrane. Functionally, f(1)F(0) ATP synthase produces ATP from ADP in the presence of a proton or sodium gradient. F-type ATPases consist of two structural domains, F(1) containing the extramembraneous catalytic core and F(0) containing the membrane proton channel, linked together by a central stalk and a peripheral stalk. During catalysis, ATP synthesis in the catalytic domain of F(1) is coupled via a rotary mechanism of the central stalk subunits to proton translocation. Its function is as follows. Component of the F(0) channel, it forms part of the peripheral stalk, linking F(1) to F(0). The chain is ATP synthase subunit b from Verminephrobacter eiseniae (strain EF01-2).